Here is a 218-residue protein sequence, read N- to C-terminus: N-(5'-phosphoribosyl)anthranilate isomerase (218 aa).

Belongs to the TrpF family.

The catalysed reaction is N-(5-phospho-beta-D-ribosyl)anthranilate = 1-(2-carboxyphenylamino)-1-deoxy-D-ribulose 5-phosphate. Its pathway is amino-acid biosynthesis; L-tryptophan biosynthesis; L-tryptophan from chorismate: step 3/5. The chain is N-(5'-phosphoribosyl)anthranilate isomerase (trpF) from Synechocystis sp. (strain ATCC 27184 / PCC 6803 / Kazusa).